A 712-amino-acid polypeptide reads, in one-letter code: Phosphomethylpyrimidine synthase (712 aa).

Residues 14–49 (AIDITAPESTIPNKSKVPNKSAESSQSTVPKAPSRR) form a disordered region. Residues 20–42 (PESTIPNKSKVPNKSAESSQSTV) show a composition bias toward polar residues. Substrate is bound by residues N283, M312, Y341, H377, 397–399 (SRG), 438–441 (DGMR), and E477. Residue H481 participates in Zn(2+) binding. Y504 contacts substrate. Zn(2+) is bound at residue H545. C625, C628, and C633 together coordinate [4Fe-4S] cluster.

The protein belongs to the ThiC family. Homodimer. Requires [4Fe-4S] cluster as cofactor.

The catalysed reaction is 5-amino-1-(5-phospho-beta-D-ribosyl)imidazole + S-adenosyl-L-methionine = 4-amino-2-methyl-5-(phosphooxymethyl)pyrimidine + CO + 5'-deoxyadenosine + formate + L-methionine + 3 H(+). It participates in cofactor biosynthesis; thiamine diphosphate biosynthesis. Catalyzes the synthesis of the hydroxymethylpyrimidine phosphate (HMP-P) moiety of thiamine from aminoimidazole ribotide (AIR) in a radical S-adenosyl-L-methionine (SAM)-dependent reaction. This Shewanella putrefaciens (strain CN-32 / ATCC BAA-453) protein is Phosphomethylpyrimidine synthase.